The sequence spans 227 residues: Cytochrome c oxidase subunit 2 (227 aa).

At 1 to 14 (MAYPLQMGLQDATS) the chain is on the mitochondrial intermembrane side. A helical membrane pass occupies residues 15–45 (PIMEELLHFHDHTLMIVFLISSLVLYIISLM). Topologically, residues 46–59 (LTTKLTHTSTMDAQ) are mitochondrial matrix. A helical membrane pass occupies residues 60-87 (EVETVWTILPAIILILIALPSLRILYMM). Over 88–227 (DEINNPSLTV…HFEKWSTSML (140 aa)) the chain is Mitochondrial intermembrane. 6 residues coordinate Cu cation: histidine 161, cysteine 196, glutamate 198, cysteine 200, histidine 204, and methionine 207. Position 198 (glutamate 198) interacts with Mg(2+).

It belongs to the cytochrome c oxidase subunit 2 family. In terms of assembly, component of the cytochrome c oxidase (complex IV, CIV), a multisubunit enzyme composed of 14 subunits. The complex is composed of a catalytic core of 3 subunits MT-CO1, MT-CO2 and MT-CO3, encoded in the mitochondrial DNA, and 11 supernumerary subunits COX4I, COX5A, COX5B, COX6A, COX6B, COX6C, COX7A, COX7B, COX7C, COX8 and NDUFA4, which are encoded in the nuclear genome. The complex exists as a monomer or a dimer and forms supercomplexes (SCs) in the inner mitochondrial membrane with NADH-ubiquinone oxidoreductase (complex I, CI) and ubiquinol-cytochrome c oxidoreductase (cytochrome b-c1 complex, complex III, CIII), resulting in different assemblies (supercomplex SCI(1)III(2)IV(1) and megacomplex MCI(2)III(2)IV(2)). Found in a complex with TMEM177, COA6, COX18, COX20, SCO1 and SCO2. Interacts with TMEM177 in a COX20-dependent manner. Interacts with COX20. Interacts with COX16. The cofactor is Cu cation.

It is found in the mitochondrion inner membrane. The enzyme catalyses 4 Fe(II)-[cytochrome c] + O2 + 8 H(+)(in) = 4 Fe(III)-[cytochrome c] + 2 H2O + 4 H(+)(out). Functionally, component of the cytochrome c oxidase, the last enzyme in the mitochondrial electron transport chain which drives oxidative phosphorylation. The respiratory chain contains 3 multisubunit complexes succinate dehydrogenase (complex II, CII), ubiquinol-cytochrome c oxidoreductase (cytochrome b-c1 complex, complex III, CIII) and cytochrome c oxidase (complex IV, CIV), that cooperate to transfer electrons derived from NADH and succinate to molecular oxygen, creating an electrochemical gradient over the inner membrane that drives transmembrane transport and the ATP synthase. Cytochrome c oxidase is the component of the respiratory chain that catalyzes the reduction of oxygen to water. Electrons originating from reduced cytochrome c in the intermembrane space (IMS) are transferred via the dinuclear copper A center (CU(A)) of subunit 2 and heme A of subunit 1 to the active site in subunit 1, a binuclear center (BNC) formed by heme A3 and copper B (CU(B)). The BNC reduces molecular oxygen to 2 water molecules using 4 electrons from cytochrome c in the IMS and 4 protons from the mitochondrial matrix. In Phoca vitulina (Harbor seal), this protein is Cytochrome c oxidase subunit 2 (MT-CO2).